The following is a 167-amino-acid chain: Endoribonuclease YbeY (167 aa).

Zn(2+) is bound by residues His125, His129, and His135.

The protein belongs to the endoribonuclease YbeY family. Zn(2+) is required as a cofactor.

Its subcellular location is the cytoplasm. Functionally, single strand-specific metallo-endoribonuclease involved in late-stage 70S ribosome quality control and in maturation of the 3' terminus of the 16S rRNA. The protein is Endoribonuclease YbeY of Allorhizobium ampelinum (strain ATCC BAA-846 / DSM 112012 / S4) (Agrobacterium vitis (strain S4)).